Consider the following 349-residue polypeptide: Hydroxymethylglutaryl-CoA synthase (349 aa).

Residues D29 and A30 each contribute to the (3S)-3-hydroxy-3-methylglutaryl-CoA site. The Proton donor/acceptor role is filled by E81. Residues C113 and T154 each contribute to the (3S)-3-hydroxy-3-methylglutaryl-CoA site. Residue C113 is the Acyl-thioester intermediate of the active site. R202 contacts CoA. Residues T204 and H237 each coordinate (3S)-3-hydroxy-3-methylglutaryl-CoA. Residue H237 is the Proton donor/acceptor of the active site. K242 is a binding site for CoA. K246, N269, and S299 together coordinate (3S)-3-hydroxy-3-methylglutaryl-CoA.

The protein belongs to the thiolase-like superfamily. Archaeal HMG-CoA synthase family. Interacts with acetoacetyl-CoA thiolase that catalyzes the precedent step in the pathway and with a DUF35 protein. The acetoacetyl-CoA thiolase/HMG-CoA synthase complex channels the intermediate via a fused CoA-binding site, which allows for efficient coupling of the endergonic thiolase reaction with the exergonic HMGCS reaction.

The enzyme catalyses acetoacetyl-CoA + acetyl-CoA + H2O = (3S)-3-hydroxy-3-methylglutaryl-CoA + CoA + H(+). It functions in the pathway metabolic intermediate biosynthesis; (R)-mevalonate biosynthesis; (R)-mevalonate from acetyl-CoA: step 2/3. In terms of biological role, catalyzes the condensation of acetyl-CoA with acetoacetyl-CoA to form 3-hydroxy-3-methylglutaryl-CoA (HMG-CoA). Functions in the mevalonate (MVA) pathway leading to isopentenyl diphosphate (IPP), a key precursor for the biosynthesis of isoprenoid compounds that are building blocks of archaeal membrane lipids. This is Hydroxymethylglutaryl-CoA synthase from Methanosarcina barkeri (strain Fusaro / DSM 804).